A 316-amino-acid polypeptide reads, in one-letter code: tRNA dimethylallyltransferase (316 aa).

Position 17-24 (17-24 (GPTASGKT)) interacts with ATP. 19–24 (TASGKT) lines the substrate pocket. 3 interaction with substrate tRNA regions span residues 42 to 45 (DSAL), 166 to 170 (QRLSR), and 247 to 252 (RCVGYR).

It belongs to the IPP transferase family. As to quaternary structure, monomer. The cofactor is Mg(2+).

It catalyses the reaction adenosine(37) in tRNA + dimethylallyl diphosphate = N(6)-dimethylallyladenosine(37) in tRNA + diphosphate. In terms of biological role, catalyzes the transfer of a dimethylallyl group onto the adenine at position 37 in tRNAs that read codons beginning with uridine, leading to the formation of N6-(dimethylallyl)adenosine (i(6)A). In Salmonella arizonae (strain ATCC BAA-731 / CDC346-86 / RSK2980), this protein is tRNA dimethylallyltransferase.